Reading from the N-terminus, the 155-residue chain is 2-C-methyl-D-erythritol 2,4-cyclodiphosphate synthase (155 aa).

Positions 8 and 10 each coordinate a divalent metal cation. Residues 8 to 10 (DVH) and 34 to 35 (HS) contribute to the 4-CDP-2-C-methyl-D-erythritol 2-phosphate site. Histidine 42 is an a divalent metal cation binding site. 4-CDP-2-C-methyl-D-erythritol 2-phosphate-binding positions include 56–58 (DIG), 61–65 (FPDTD), 100–106 (AQAPKMA), 132–135 (TTTE), phenylalanine 139, and arginine 142.

This sequence belongs to the IspF family. As to quaternary structure, homotrimer. A divalent metal cation serves as cofactor.

It catalyses the reaction 4-CDP-2-C-methyl-D-erythritol 2-phosphate = 2-C-methyl-D-erythritol 2,4-cyclic diphosphate + CMP. Its pathway is isoprenoid biosynthesis; isopentenyl diphosphate biosynthesis via DXP pathway; isopentenyl diphosphate from 1-deoxy-D-xylulose 5-phosphate: step 4/6. In terms of biological role, involved in the biosynthesis of isopentenyl diphosphate (IPP) and dimethylallyl diphosphate (DMAPP), two major building blocks of isoprenoid compounds. Catalyzes the conversion of 4-diphosphocytidyl-2-C-methyl-D-erythritol 2-phosphate (CDP-ME2P) to 2-C-methyl-D-erythritol 2,4-cyclodiphosphate (ME-CPP) with a corresponding release of cytidine 5-monophosphate (CMP). This Saccharophagus degradans (strain 2-40 / ATCC 43961 / DSM 17024) protein is 2-C-methyl-D-erythritol 2,4-cyclodiphosphate synthase.